Consider the following 126-residue polypeptide: Large ribosomal subunit protein bL12 (126 aa).

It belongs to the bacterial ribosomal protein bL12 family. Homodimer. Part of the ribosomal stalk of the 50S ribosomal subunit. Forms a multimeric L10(L12)X complex, where L10 forms an elongated spine to which 2 to 4 L12 dimers bind in a sequential fashion. Binds GTP-bound translation factors.

Forms part of the ribosomal stalk which helps the ribosome interact with GTP-bound translation factors. Is thus essential for accurate translation. The sequence is that of Large ribosomal subunit protein bL12 from Desulfatibacillum aliphaticivorans.